We begin with the raw amino-acid sequence, 2295 residues long: Protein DOP1B (2295 aa).

2 positions are modified to phosphoserine: serine 556 and serine 597. Disordered regions lie at residues 574-599 (AGDE…SSPE), 651-684 (GEEN…DPKP), 1034-1059 (CKEA…QFTT), and 1092-1136 (DLPD…LQDL). The segment covering 1111 to 1131 (ADTSSGHTDSENTSTFSSPSH) has biased composition (polar residues). Serine 1167 bears the Phosphoserine mark.

Belongs to the DOP1 family. Homooligomer. Heterotrimer with ATP9A and MON2; this interaction is retromer-independent. Interacts with SNX3. In terms of tissue distribution, expressed in liver, heart and brain.

The protein resides in the early endosome membrane. The protein localises to the golgi apparatus membrane. In terms of biological role, may play a role in regulating membrane trafficking of cargo proteins. Together with ATP9A and MON2, regulates SNX3 retromer-mediated endosomal sorting of WLS away from lysosomal degradation. This Mus musculus (Mouse) protein is Protein DOP1B (Dop1b).